The chain runs to 347 residues: Phosphoribosylformylglycinamidine cyclo-ligase (347 aa).

It belongs to the AIR synthase family.

The protein resides in the cytoplasm. It catalyses the reaction 2-formamido-N(1)-(5-O-phospho-beta-D-ribosyl)acetamidine + ATP = 5-amino-1-(5-phospho-beta-D-ribosyl)imidazole + ADP + phosphate + H(+). Its pathway is purine metabolism; IMP biosynthesis via de novo pathway; 5-amino-1-(5-phospho-D-ribosyl)imidazole from N(2)-formyl-N(1)-(5-phospho-D-ribosyl)glycinamide: step 2/2. In Prochlorococcus marinus subsp. pastoris (strain CCMP1986 / NIES-2087 / MED4), this protein is Phosphoribosylformylglycinamidine cyclo-ligase.